Reading from the N-terminus, the 1022-residue chain is Collagen alpha-1(I) chain (1022 aa).

Residues 1-1022 (SAGGISVPGP…PGPPGPPGPP (1022 aa)) are disordered. 11 positions are modified to 4-hydroxyproline: Pro-20, Pro-23, Pro-26, Pro-35, Pro-38, Pro-41, Pro-56, Pro-71, Pro-77, Pro-86, and Pro-92. A compositionally biased stretch (low complexity) spans 28–47 (PQGFQGPPGEPGEPGASGPM). Positions 59-73 (NGDDGEAGKPGRPGE) are enriched in basic and acidic residues. Lys-95 carries the post-translational modification 5-hydroxylysine; alternate. Lys-95 is a glycosylation site (O-linked (Gal...) hydroxylysine; alternate). Ser-101 carries the phosphoserine modification. Residues 109 to 125 (DAGPAGPKGEPGSPGEN) show a composition bias toward low complexity. A 4-hydroxyproline mark is found at Pro-119, Pro-122, Pro-128, Pro-137, Pro-143, Pro-164, Pro-173, Pro-176, Pro-203, Pro-206, Pro-218, Pro-224, Pro-233, Pro-239, Pro-242, and Pro-257. Over residues 143 to 161 (PGASGPAGARGNDGAAGAA) the composition is skewed to low complexity. The segment covering 163-175 (PPGPTGPAGPPGF) has biased composition (pro residues). The span at 209 to 259 (AGAAGPAGNPGADGQPGAKGANGAPGIAGAPGFPGARGPSGPQGPSGAPGP) shows a compositional bias: low complexity. A 5-hydroxylysine modification is found at Lys-260. 4-hydroxyproline occurs at positions 266, 269, 281, 290, 305, 311, 320, and 326. Gly residues predominate over residues 315–324 (GERGGPGSRG). Lys-335 is modified (5-hydroxylysine). 4-hydroxyproline occurs at positions 344, 353, 359, 365, 374, 377, 386, 395, 401, 413, 422, 431, 434, 452, 470, 476, 482, 488, 494, 500, 512, 521, 533, 545, 548, 554, 560, and 569. A compositionally biased stretch (low complexity) spans 368 to 394 (KGLTGSPGSPGPDGKTGPPGPAGQDGR). Positions 403 to 422 (ARGQAGVMGFPGPKGAAGEP) are enriched in low complexity. Positions 464–491 (QGPAGSPGFQGLPGPAGPPGEAGKPGEQ) are enriched in low complexity. Low complexity predominate over residues 530 to 557 (NGAPGNDGAKGDAGAPGAPGSQGAPGLQ). Residue Lys-581 is modified to 5-hydroxylysine. 4-hydroxyproline occurs at positions 587, 602, and 608. Positions 614–628 (SGPSGPAGPTGARGA) are enriched in low complexity. A Phosphoserine modification is found at Ser-617. A 4-hydroxyproline mark is found at Pro-629, Pro-635, Pro-638, Pro-647, Pro-653, Pro-671, Pro-680, and Pro-689. Low complexity predominate over residues 641–668 (AGFAGPPGADGQPGAKGEPGDAGAKGDA). A compositionally biased stretch (pro residues) spans 670–682 (PPGPAGPTGPPGP). Position 692 is a 5-hydroxylysine (Lys-692). Residues 697–713 (SAGPPGATGFPGAAGRV) show a composition bias toward low complexity. Pro-701 and Pro-707 each carry 4-hydroxyproline. Pro-715 is modified (3-hydroxyproline). 4-hydroxyproline is present on residues Pro-716, Pro-725, Pro-728, Pro-749, Pro-758, Pro-767, Pro-776, Pro-794, Pro-803, Pro-806, Pro-812, Pro-827, Pro-833, Pro-839, Pro-848, and Pro-854. Positions 742–751 (ETGPAGRPGE) are enriched in low complexity. Positions 761 to 776 (TGEKGSPGADGPAGAP) are enriched in low complexity. Residues 826-836 (PPGPVGPPGLA) show a composition bias toward pro residues. Residues 838 to 853 (PPGESGREGSPGAEGS) show a composition bias toward low complexity. 5-hydroxylysine is present on Lys-863. The segment covering 872–887 (AGPPGAPGAPGAPGPV) has biased composition (pro residues). A 4-hydroxyproline mark is found at Pro-875, Pro-878, and Pro-881. Positions 908–922 (AGPAGARGPAGPQGP) are enriched in low complexity. The segment covering 923-937 (RGDKGETGEQGDRGI) has biased composition (basic and acidic residues). At Lys-926 the chain carries 5-hydroxylysine. Lys-938 bears the 5-hydroxylysine; alternate mark. A glycan (O-linked (Gal...) hydroxylysine; alternate) is linked at Lys-938. 4-hydroxyproline occurs at positions 953, 956, 974, and 989. Residues 956–989 (PGEQGPSGASGPAGPRGPPGSAGSPGKDGLNGLP) are compositionally biased toward low complexity. At Pro-994 the chain carries 3-hydroxyproline. 4-hydroxyproline is present on Pro-995. Positions 1007 to 1022 (VGPPGPPGPPGPPGPP) are enriched in pro residues. Pro-1009 carries the post-translational modification 3-hydroxyproline. Pro-1010 carries the 4-hydroxyproline modification. Pro-1012 bears the 3-hydroxyproline mark. Position 1013 is a 4-hydroxyproline (Pro-1013). Pro-1015 carries the post-translational modification 3-hydroxyproline. Pro-1016, Pro-1019, and Pro-1022 each carry 4-hydroxyproline.

The protein belongs to the fibrillar collagen family. Trimers of one alpha 2(I) and two alpha 1(I) chains. Post-translationally, prolines at the third position of the tripeptide repeating unit (G-X-Y) are hydroxylated in some or all of the chains. As to expression, expressed in bone.

It is found in the secreted. The protein localises to the extracellular space. The protein resides in the extracellular matrix. In terms of biological role, type I collagen is a member of group I collagen (fibrillar forming collagen). The protein is Collagen alpha-1(I) chain of Mylodon darwinii (Giant ground sloth).